The following is a 451-amino-acid chain: Glutamyl-tRNA(Gln) amidotransferase subunit D (451 aa).

Residues 78 to 97 (PREAPTPGEEEGSQEDFGQP) are disordered. Positions 99 to 432 (PRVFFVGTGG…EEIQRLFTAN (334 aa)) constitute an Asparaginase/glutaminase domain. Residues threonine 109, threonine 187, aspartate 188, and lysine 266 contribute to the active site.

It belongs to the asparaginase 1 family. GatD subfamily. As to quaternary structure, heterodimer of GatD and GatE.

The catalysed reaction is L-glutamyl-tRNA(Gln) + L-glutamine + ATP + H2O = L-glutaminyl-tRNA(Gln) + L-glutamate + ADP + phosphate + H(+). Allows the formation of correctly charged Gln-tRNA(Gln) through the transamidation of misacylated Glu-tRNA(Gln) in organisms which lack glutaminyl-tRNA synthetase. The reaction takes place in the presence of glutamine and ATP through an activated gamma-phospho-Glu-tRNA(Gln). The GatDE system is specific for glutamate and does not act on aspartate. The polypeptide is Glutamyl-tRNA(Gln) amidotransferase subunit D (Thermofilum pendens (strain DSM 2475 / Hrk 5)).